A 192-amino-acid chain; its full sequence is Fe/S biogenesis protein NfuA (192 aa).

Cys149 and Cys152 together coordinate [4Fe-4S] cluster.

The protein belongs to the NfuA family. In terms of assembly, homodimer. [4Fe-4S] cluster is required as a cofactor.

Its function is as follows. Involved in iron-sulfur cluster biogenesis. Binds a 4Fe-4S cluster, can transfer this cluster to apoproteins, and thereby intervenes in the maturation of Fe/S proteins. Could also act as a scaffold/chaperone for damaged Fe/S proteins. The chain is Fe/S biogenesis protein NfuA from Shewanella pealeana (strain ATCC 700345 / ANG-SQ1).